Here is a 260-residue protein sequence, read N- to C-terminus: 1-(5-phosphoribosyl)-5-[(5-phosphoribosylamino)methylideneamino] imidazole-4-carboxamide isomerase (260 aa).

The active-site Proton acceptor is the D8. The Proton donor role is filled by D130.

Belongs to the HisA/HisF family.

Its subcellular location is the cytoplasm. It catalyses the reaction 1-(5-phospho-beta-D-ribosyl)-5-[(5-phospho-beta-D-ribosylamino)methylideneamino]imidazole-4-carboxamide = 5-[(5-phospho-1-deoxy-D-ribulos-1-ylimino)methylamino]-1-(5-phospho-beta-D-ribosyl)imidazole-4-carboxamide. It participates in amino-acid biosynthesis; L-histidine biosynthesis; L-histidine from 5-phospho-alpha-D-ribose 1-diphosphate: step 4/9. The chain is 1-(5-phosphoribosyl)-5-[(5-phosphoribosylamino)methylideneamino] imidazole-4-carboxamide isomerase from Chlorobium phaeobacteroides (strain BS1).